The chain runs to 159 residues: Crossover junction endodeoxyribonuclease RuvC (159 aa).

Residues D7, E67, and D139 contribute to the active site. 3 residues coordinate Mg(2+): D7, E67, and D139.

It belongs to the RuvC family. In terms of assembly, homodimer which binds Holliday junction (HJ) DNA. The HJ becomes 2-fold symmetrical on binding to RuvC with unstacked arms; it has a different conformation from HJ DNA in complex with RuvA. In the full resolvosome a probable DNA-RuvA(4)-RuvB(12)-RuvC(2) complex forms which resolves the HJ. The cofactor is Mg(2+).

Its subcellular location is the cytoplasm. The enzyme catalyses Endonucleolytic cleavage at a junction such as a reciprocal single-stranded crossover between two homologous DNA duplexes (Holliday junction).. The RuvA-RuvB-RuvC complex processes Holliday junction (HJ) DNA during genetic recombination and DNA repair. Endonuclease that resolves HJ intermediates. Cleaves cruciform DNA by making single-stranded nicks across the HJ at symmetrical positions within the homologous arms, yielding a 5'-phosphate and a 3'-hydroxyl group; requires a central core of homology in the junction. The consensus cleavage sequence is 5'-(A/T)TT(C/G)-3'. Cleavage occurs on the 3'-side of the TT dinucleotide at the point of strand exchange. HJ branch migration catalyzed by RuvA-RuvB allows RuvC to scan DNA until it finds its consensus sequence, where it cleaves and resolves the cruciform DNA. This is Crossover junction endodeoxyribonuclease RuvC from Orientia tsutsugamushi (strain Boryong) (Rickettsia tsutsugamushi).